The primary structure comprises 1241 residues: Putative ABC transporter B family member 8 (1241 aa).

Residues 24 to 44 (FADWIDIVLMVLGSVGAIGDG) traverse the membrane as a helical segment. Positions 33–323 (MVLGSVGAIG…ALTEIRYFSE (291 aa)) constitute an ABC transmembrane type-1 1 domain. An N-linked (GlcNAc...) asparagine glycan is attached at N48. The next 5 membrane-spanning stretches (helical) occupy residues 82 to 102 (LYFV…GYCW), 157 to 177 (VPIF…SAYF), 183 to 203 (VVAI…GKYL), 263 to 283 (GLAV…AWYG), and 297 to 317 (IYAA…ALTE). Positions 360-596 (VEFERVTLVY…NNHYAKLVKL (237 aa)) constitute an ABC transporter 1 domain. Residue 395–402 (GASGSGKS) participates in ATP binding. N571, N632, and N648 each carry an N-linked (GlcNAc...) asparagine glycan. The region spanning 676 to 964 (SLVGCISATT…AGSMTSDLAK (289 aa)) is the ABC transmembrane type-1 2 domain. The next 2 helical transmembrane spans lie at 686 to 706 (FGAI…AFFA) and 716 to 736 (IHIY…LNLL). An N-linked (GlcNAc...) asparagine glycan is attached at N773. 2 helical membrane passes run 797-815 (ISLL…IIGL) and 821-838 (LALV…CFYT). N-linked (GlcNAc...) asparagine glycosylation is present at N855. The next 2 membrane-spanning stretches (helical) occupy residues 899-919 (AWLA…TWAL) and 933-953 (ISAG…KVIA). The region spanning 998–1236 (IELKNIDFSY…GGQFSRLAHA (239 aa)) is the ABC transporter 2 domain. 1033–1040 (GTSGCGKS) is a binding site for ATP. N-linked (GlcNAc...) asparagine glycosylation occurs at N1187.

It belongs to the ABC transporter superfamily. ABCB family. Multidrug resistance exporter (TC 3.A.1.201) subfamily.

Its subcellular location is the membrane. In Arabidopsis thaliana (Mouse-ear cress), this protein is Putative ABC transporter B family member 8 (ABCB8).